A 332-amino-acid chain; its full sequence is Lipoyl synthase (332 aa).

[4Fe-4S] cluster contacts are provided by C74, C79, C85, C100, C104, C107, and S314. The Radical SAM core domain maps to 85-303 (CFGKGTATFM…EEKAYEMGFS (219 aa)).

This sequence belongs to the radical SAM superfamily. Lipoyl synthase family. [4Fe-4S] cluster serves as cofactor.

The protein resides in the cytoplasm. It catalyses the reaction [[Fe-S] cluster scaffold protein carrying a second [4Fe-4S](2+) cluster] + N(6)-octanoyl-L-lysyl-[protein] + 2 oxidized [2Fe-2S]-[ferredoxin] + 2 S-adenosyl-L-methionine + 4 H(+) = [[Fe-S] cluster scaffold protein] + N(6)-[(R)-dihydrolipoyl]-L-lysyl-[protein] + 4 Fe(3+) + 2 hydrogen sulfide + 2 5'-deoxyadenosine + 2 L-methionine + 2 reduced [2Fe-2S]-[ferredoxin]. Its pathway is protein modification; protein lipoylation via endogenous pathway; protein N(6)-(lipoyl)lysine from octanoyl-[acyl-carrier-protein]: step 2/2. In terms of biological role, catalyzes the radical-mediated insertion of two sulfur atoms into the C-6 and C-8 positions of the octanoyl moiety bound to the lipoyl domains of lipoate-dependent enzymes, thereby converting the octanoylated domains into lipoylated derivatives. The protein is Lipoyl synthase of Polaromonas naphthalenivorans (strain CJ2).